We begin with the raw amino-acid sequence, 272 residues long: Peptidoglycolipid exporter Gap (272 aa).

A run of 6 helical transmembrane segments spans residues 5 to 25, 36 to 56, 79 to 99, 171 to 191, 206 to 226, and 252 to 272; these read ILGL…ILLV, VVFW…PLFV, IEPF…VIAL, LWVA…VLLV, IIAV…TLLS, and ILLV…LGVI.

The protein belongs to the peptidoglycolipid addressing protein (GAP) (TC 2.A.116) family.

The protein resides in the cell inner membrane. In terms of biological role, required for the transport of peptidoglycolipids (GPLs) to the cell surface. The chain is Peptidoglycolipid exporter Gap from Mycolicibacterium smegmatis (strain ATCC 700084 / mc(2)155) (Mycobacterium smegmatis).